Consider the following 241-residue polypeptide: uncharacterized protein (241 aa).

Disordered stretches follow at residues 19–59 (ERDR…QQLG), 101–139 (VRRPNPSVPSPLPKPPVPSAGSCEPLAPPPTSASGASRS), and 152–182 (RGCRPAPGSAAGWPRSDRRARLPRKASKPCS). Over residues 34 to 48 (ARGGRGLWTVGGGGS) the composition is skewed to gly residues. A compositionally biased stretch (polar residues) spans 49 to 58 (PTETAESQQL). Residues 106–118 (PSVPSPLPKPPVP) are compositionally biased toward pro residues.

This is an uncharacterized protein from Homo sapiens (Human).